Here is a 95-residue protein sequence, read N- to C-terminus: Large ribosomal subunit protein bL25 (95 aa).

This sequence belongs to the bacterial ribosomal protein bL25 family. As to quaternary structure, part of the 50S ribosomal subunit; part of the 5S rRNA/L5/L18/L25 subcomplex. Contacts the 5S rRNA. Binds to the 5S rRNA independently of L5 and L18.

This is one of the proteins that binds to the 5S RNA in the ribosome where it forms part of the central protuberance. This chain is Large ribosomal subunit protein bL25, found in Yersinia enterocolitica serotype O:8 / biotype 1B (strain NCTC 13174 / 8081).